We begin with the raw amino-acid sequence, 72 residues long: Cytochrome b-c1 complex subunit 8 (72 aa).

At 2-41 (GKQPVKLKAVVYAISPFQQKIMPGLWKDLPGKIHHKVSEN) the chain is on the mitochondrial matrix side. A helical transmembrane segment spans residues 42–59 (WISATLLLGPLVGTYSYV). The Mitochondrial intermembrane portion of the chain corresponds to 60 to 72 (QHFLEKEKLEHRY).

It belongs to the UQCRQ/QCR8 family. As to quaternary structure, component of the ubiquinol-cytochrome c oxidoreductase (cytochrome b-c1 complex, complex III, CIII), a multisubunit enzyme composed of 3 respiratory subunits cytochrome b, cytochrome c1 and Rieske protein, 2 core protein subunits, and additional low-molecular weight protein subunits. The complex exists as an obligatory dimer and forms supercomplexes (SCs) in the inner mitochondrial membrane with cytochrome c oxidase (complex IV, CIV).

The protein localises to the mitochondrion inner membrane. Component of the ubiquinol-cytochrome c oxidoreductase, a multisubunit transmembrane complex that is part of the mitochondrial electron transport chain which drives oxidative phosphorylation. The respiratory chain contains 3 multisubunit complexes succinate dehydrogenase (complex II, CII), ubiquinol-cytochrome c oxidoreductase (cytochrome b-c1 complex, complex III, CIII) and cytochrome c oxidase (complex IV, CIV), that cooperate to transfer electrons derived from NADH and succinate to molecular oxygen, creating an electrochemical gradient over the inner membrane that drives transmembrane transport and the ATP synthase. The cytochrome b-c1 complex catalyzes electron transfer from ubiquinol to cytochrome c, linking this redox reaction to translocation of protons across the mitochondrial inner membrane, with protons being carried across the membrane as hydrogens on the quinol. In the process called Q cycle, 2 protons are consumed from the matrix, 4 protons are released into the intermembrane space and 2 electrons are passed to cytochrome c. In Solanum tuberosum (Potato), this protein is Cytochrome b-c1 complex subunit 8.